The following is a 116-amino-acid chain: Ferredoxin-like protein in nif region (116 aa).

The 28-residue stretch at 2–29 folds into the 4Fe-4S ferredoxin-type domain; the sequence is AYTITSQCISCKLCSSVCPTGAIKVAED. The iron-sulfur cluster site is built by Cys9, Cys12, Cys15, and Cys19.

In Trichormus azollae (Anabaena azollae), this protein is Ferredoxin-like protein in nif region (fdxN).